Consider the following 374-residue polypeptide: Ribosomal RNA large subunit methyltransferase G (374 aa).

This sequence belongs to the methyltransferase superfamily. RlmG family.

Its subcellular location is the cytoplasm. The enzyme catalyses guanosine(1835) in 23S rRNA + S-adenosyl-L-methionine = N(2)-methylguanosine(1835) in 23S rRNA + S-adenosyl-L-homocysteine + H(+). Specifically methylates the guanine in position 1835 (m2G1835) of 23S rRNA. The sequence is that of Ribosomal RNA large subunit methyltransferase G from Pseudomonas aeruginosa (strain UCBPP-PA14).